The primary structure comprises 701 residues: Elongation factor G 1 (701 aa).

In terms of domain architecture, tr-type G spans 5–281; the sequence is SKYRNIGIFA…AVVDYLPSPT (277 aa). GTP contacts are provided by residues 14 to 21, 78 to 82, and 132 to 135; these read AHVDAGKT, DTPGH, and NKLD.

This sequence belongs to the TRAFAC class translation factor GTPase superfamily. Classic translation factor GTPase family. EF-G/EF-2 subfamily.

Its subcellular location is the cytoplasm. Catalyzes the GTP-dependent ribosomal translocation step during translation elongation. During this step, the ribosome changes from the pre-translocational (PRE) to the post-translocational (POST) state as the newly formed A-site-bound peptidyl-tRNA and P-site-bound deacylated tRNA move to the P and E sites, respectively. Catalyzes the coordinated movement of the two tRNA molecules, the mRNA and conformational changes in the ribosome. This chain is Elongation factor G 1, found in Colwellia psychrerythraea (strain 34H / ATCC BAA-681) (Vibrio psychroerythus).